The sequence spans 322 residues: MQPSGWAAAREAAGRDMLAADLRCSLFASALQSYKRDSVLRPFPASYARGDCKDFEALLADASKLPNLKELLQSSGDNHKRAWDLVSWILSSKVLTIHSAGKAEFEKIQKLTGAPHTPVPAPDFLFEIEYFDPANAKFYETKGERDLIYAFHGSRLENFHSIIHNGLHCHLNKTSLFGEGTYLTSDLSLALIYSPHGHGWQHSLLGPILSCVAVCEVIDHPDVKCQTKKKDSKEIDRRRARIKHSEGGDIPPKYFVVTNNQLLRVKYLLVYSQKPPKRASSQLSWFSSHWFTVMISLYLLLLLIVSVINSSAFQHFWNRAKR.

The Cytoplasmic segment spans residues Met1 to Ser287. One can recognise a PARP alpha-helical domain in the interval Gly5 to Ser91. Asp37 carries the ADP-ribosyl aspartic acid modification. An ADP-ribosyl glutamic acid modification is found at Glu70. The region spanning Val94–Ala279 is the PARP catalytic domain. N6-(ADP-ribosyl)lysine is present on residues Lys110 and Lys137. NAD(+) is bound by residues His152, Tyr182, and Tyr254. A helical membrane pass occupies residues Ser288–Ile308. At Asn309–Arg322 the chain is on the lumenal side.

It belongs to the ARTD/PARP family. Interacts with KPNB1. Post-translationally, auto-mono-ADP-ribosylated.

It is found in the endoplasmic reticulum membrane. It carries out the reaction L-aspartyl-[protein] + NAD(+) = 4-O-(ADP-D-ribosyl)-L-aspartyl-[protein] + nicotinamide. The enzyme catalyses L-glutamyl-[protein] + NAD(+) = 5-O-(ADP-D-ribosyl)-L-glutamyl-[protein] + nicotinamide. The catalysed reaction is L-lysyl-[protein] + NAD(+) = N(6)-(ADP-D-ribosyl)-L-lysyl-[protein] + nicotinamide + H(+). With respect to regulation, in absence of activation signal, PARP16 is autoinhibited by the PARP alpha-helical domain (also named HD region), which prevents effective NAD(+)-binding. Activity is highly stimulated by signals, which unfold the PARP alpha-helical domain, relieving autoinhibition. In terms of biological role, intracellular mono-ADP-ribosyltransferase that plays a role in different processes, such as protein translation and unfolded protein response (UPR), through the mono-ADP-ribosylation of proteins involved in those processes. Acts as an inhibitor of protein translation by catalyzing mono-ADP-ribosylation of ribosomal subunits, such as RPL14 and RPS6, thereby inhibiting polysome assembly and mRNA loading. Mono-ADP-ribosylation of ribosomal subunits is promoted by NMNAT2. Involved in the unfolded protein response (UPR) by ADP-ribosylating and activating EIF2AK3 and ERN1, two important UPR effectors. May also mediate mono-ADP-ribosylation of karyopherin KPNB1 a nuclear import factor. May not modify proteins on arginine or cysteine residues compared to other mono-ADP-ribosyltransferases. The polypeptide is Protein mono-ADP-ribosyltransferase PARP16 (Homo sapiens (Human)).